The following is a 337-amino-acid chain: DNA-directed RNA polymerase subunit alpha (337 aa).

The tract at residues M1–N223 is alpha N-terminal domain (alpha-NTD). The alpha C-terminal domain (alpha-CTD) stretch occupies residues S238–E337.

It belongs to the RNA polymerase alpha chain family. In terms of assembly, homodimer. The RNAP catalytic core consists of 2 alpha, 1 beta, 1 beta' and 1 omega subunit. When a sigma factor is associated with the core the holoenzyme is formed, which can initiate transcription.

It catalyses the reaction RNA(n) + a ribonucleoside 5'-triphosphate = RNA(n+1) + diphosphate. DNA-dependent RNA polymerase catalyzes the transcription of DNA into RNA using the four ribonucleoside triphosphates as substrates. This chain is DNA-directed RNA polymerase subunit alpha, found in Corynebacterium jeikeium (strain K411).